The sequence spans 166 residues: Heme-degrading monooxygenase HmoB (166 aa).

Asn-33 serves as a coordination point for Fe cation. Residues Phe-66–Phe-153 enclose the ABM domain. His-138 serves as a coordination point for heme.

This sequence belongs to the antibiotic biosynthesis monooxygenase family. As to quaternary structure, homodimer.

Its subcellular location is the cytoplasm. The catalysed reaction is heme b + 3 reduced [NADPH--hemoprotein reductase] + 3 O2 = biliverdin IXalpha + CO + Fe(2+) + 3 oxidized [NADPH--hemoprotein reductase] + 3 H2O + H(+). In terms of biological role, catalyzes the oxidative degradation of the heme macrocyclic porphyrin ring in the presence of a suitable electron donor such as ascorbate or NADPH--cytochrome P450 reductase, with subsequent release of free iron. The polypeptide is Heme-degrading monooxygenase HmoB (hmoB) (Bacillus subtilis (strain 168)).